A 57-amino-acid chain; its full sequence is Andropin (57 aa).

A signal peptide spans 1–23 (MKYFVVLVVLALILAITVGPSDA).

The protein belongs to the andropin family. Ejaculatory duct of adult males.

Its subcellular location is the secreted. Male-specific peptide with moderate activity against Gram-positive bacteria. The polypeptide is Andropin (Anp) (Drosophila mauritiana (Fruit fly)).